The sequence spans 344 residues: Pre-mRNA-splicing factor cwc-21 (344 aa).

Residues 1–19 (MSDNVGLSTPRGSGTSGYV) show a composition bias toward polar residues. Disordered regions lie at residues 1–58 (MSDN…LEHD) and 98–344 (EMER…DNRD). Positions 38–58 (KDFDSLKHQPRQPDKGLLEHD) are enriched in basic and acidic residues. Positions 55 to 98 (LEHDRKREVEVKVFELRDKLEEEGVEEDEIETRCDELRRKLLAE) constitute a CWF21 domain. Positions 69–105 (ELRDKLEEEGVEEDEIETRCDELRRKLLAEMERNQNS) form a coiled coil. 3 stretches are compositionally biased toward basic and acidic residues: residues 120–167 (QVHE…REAN), 188–226 (RGGD…DRPP), and 238–277 (GGRD…DTGR). Residues 288–306 (SRSRSRSRSYSRSRSPPRR) are compositionally biased toward basic residues. Basic and acidic residues-rich tracts occupy residues 307–316 (RAADSQDRSL) and 327–344 (SPDR…DNRD).

This sequence belongs to the CWC21 family. As to quaternary structure, associates with the NTC complex (or PRP19-associated complex). The NTC complex associates with the spliceosome after the release of the U1 and U4 snRNAs and forms the CWC spliceosome subcomplex reminiscent of a late-stage spliceosome.

The protein localises to the cytoplasm. It localises to the nucleus. Involved in pre-mRNA splicing. May function at or prior to the first catalytic step of splicing at the catalytic center of the spliceosome. May do so by stabilizing the catalytic center or the position of the RNA substrate. In Neurospora crassa (strain ATCC 24698 / 74-OR23-1A / CBS 708.71 / DSM 1257 / FGSC 987), this protein is Pre-mRNA-splicing factor cwc-21 (cwc-21).